The sequence spans 185 residues: Ribosome-recycling factor (185 aa).

The tract at residues 143–163 (RKDGEAGEDEVARAEKDLDKS) is disordered.

Belongs to the RRF family.

It is found in the cytoplasm. Its function is as follows. Responsible for the release of ribosomes from messenger RNA at the termination of protein biosynthesis. May increase the efficiency of translation by recycling ribosomes from one round of translation to another. The sequence is that of Ribosome-recycling factor from Mycobacterium marinum (strain ATCC BAA-535 / M).